Reading from the N-terminus, the 782-residue chain is Nucleolar RNA helicase 2 (782 aa).

The tract at residues Met1–Phe184 is disordered. 2 positions are modified to phosphoserine: Ser7 and Ser13. Composition is skewed to basic and acidic residues over residues Pro26–Glu42 and Glu99–Glu117. The residue at position 39 (Lys39) is an N6-acetyllysine. Lys114 is covalently cross-linked (Glycyl lysine isopeptide (Lys-Gly) (interchain with G-Cter in SUMO1); alternate). Residue Lys114 forms a Glycyl lysine isopeptide (Lys-Gly) (interchain with G-Cter in SUMO2); alternate linkage. At Ser119 the chain carries Phosphoserine. Positions Gly134–Glu143 are enriched in basic and acidic residues. Lys135 is subject to N6-acetyllysine. A phosphoserine mark is found at Ser145 and Ser169. The segment covering Glu172–Glu181 has biased composition (basic and acidic residues). Positions Gly182–Ala210 match the Q motif motif. A Helicase ATP-binding domain is found at Phe213–Gln392. Ala226–Thr233 is an ATP binding site. Thr292 is subject to Phosphothreonine. A DEAD box motif is present at residues Asp335 to Asp338. Residues Asp425–Lys569 enclose the Helicase C-terminal domain. Ser563 is subject to Phosphoserine. Residue Lys596 is modified to N6-acetyllysine. The interval Ala704–Gln782 is disordered. 3 consecutive repeat copies span residues Gly720–Arg724, Phe731–Arg735, and Phe741–Arg747. Residues Gly720–Arg747 are 3 X 5 AA repeats. Residues Arg728–Gln756 show a composition bias toward low complexity. At Lys778 the chain carries N6-acetyllysine.

The protein belongs to the DEAD box helicase family. DDX21/DDX50 subfamily. In terms of assembly, homodimer; homodimerizes via its N-terminus. Found in a multi-helicase-TICAM1 complex at least composed of DHX36, DDX1, DDX21 and TICAM1; this complex exists in resting cells with or without poly(I:C) RNA ligand stimulation. Interacts (via C-terminus) with TICAM1 (via TIR domain). Interacts with DHX36 (via C-terminus); this interaction serves as bridges to TICAM1. Interacts (via C-terminus) with DDX1 (via B30.2/SPRY domain); this interaction serves as bridges to TICAM1. Component of the B-WICH complex, at least composed of SMARCA5/SNF2H, BAZ1B/WSTF, SF3B1, DEK, MYO1C, ERCC6, MYBBP1A and DDX21. Interacts with C1QBP. Interacts with JUN. Interacts with WDR46. Interacts with MCM3AP. Interacts with WDR43. Interacts with KPNA3. Interacts with GID4. Post-translationally, acetylation by CREBBP/CBP inhibits the helicase activity. Deacetylation by SIRT7 promotes the helicase activity and overcomes R-loop-mediated stalling of RNA polymerases.

It localises to the nucleus. The protein localises to the nucleolus. The protein resides in the nucleoplasm. Its subcellular location is the cytoplasm. It is found in the cytosol. It localises to the mitochondrion. It catalyses the reaction ATP + H2O = ADP + phosphate + H(+). With respect to regulation, acetylation inhibits the helicase activity. In terms of biological role, RNA helicase that acts as a sensor of the transcriptional status of both RNA polymerase (Pol) I and II: promotes ribosomal RNA (rRNA) processing and transcription from polymerase II (Pol II). Binds various RNAs, such as rRNAs, snoRNAs, 7SK and, at lower extent, mRNAs. In the nucleolus, localizes to rDNA locus, where it directly binds rRNAs and snoRNAs, and promotes rRNA transcription, processing and modification. Required for rRNA 2'-O-methylation, possibly by promoting the recruitment of late-acting snoRNAs SNORD56 and SNORD58 with pre-ribosomal complexes. In the nucleoplasm, binds 7SK RNA and is recruited to the promoters of Pol II-transcribed genes: acts by facilitating the release of P-TEFb from inhibitory 7SK snRNP in a manner that is dependent on its helicase activity, thereby promoting transcription of its target genes. Functions as a cofactor for JUN-activated transcription: required for phosphorylation of JUN at 'Ser-77'. Can unwind double-stranded RNA (helicase) and can fold or introduce a secondary structure to a single-stranded RNA (foldase). Together with SIRT7, required to prevent R-loop-associated DNA damage and transcription-associated genomic instability: deacetylation by SIRT7 activates the helicase activity, thereby overcoming R-loop-mediated stalling of RNA polymerases. Involved in rRNA processing. May bind to specific miRNA hairpins. Component of a multi-helicase-TICAM1 complex that acts as a cytoplasmic sensor of viral double-stranded RNA (dsRNA) and plays a role in the activation of a cascade of antiviral responses including the induction of pro-inflammatory cytokines via the adapter molecule TICAM1. The polypeptide is Nucleolar RNA helicase 2 (Ddx21) (Rattus norvegicus (Rat)).